Consider the following 359-residue polypeptide: GDSL esterase/lipase At5g03610 (359 aa).

Positions 1-22 (MDSLIKLFFCLFIFLCTSLLFG) are cleaved as a signal peptide. Catalysis depends on Ser50, which acts as the Nucleophile. Residues Asn136, Asn236, and Asn259 are each glycosylated (N-linked (GlcNAc...) asparagine). Residues Asp332 and His335 contribute to the active site.

Belongs to the 'GDSL' lipolytic enzyme family.

It localises to the secreted. The chain is GDSL esterase/lipase At5g03610 from Arabidopsis thaliana (Mouse-ear cress).